Here is a 121-residue protein sequence, read N- to C-terminus: Flagellar protein FliT (121 aa).

A required for homodimerization region spans residues 1-50; it reads MNNAPHLYFAWQQLVEKSQLMLRLATEEQWDELIASEMAYVNAVQEIAHL. The tract at residues 60 to 98 is fliD binding; that stretch reads MQEQLRPMLLLILDNESKVKQLLQIRMDELAKLVGQSSV.

The protein belongs to the FliT family. As to quaternary structure, homodimer. Interacts with FliD and FlhC.

The protein localises to the cytoplasm. It localises to the cytosol. Its function is as follows. Dual-function protein that regulates the transcription of class 2 flagellar operons and that also acts as an export chaperone for the filament-capping protein FliD. As a transcriptional regulator, acts as an anti-FlhDC factor; it directly binds FlhC, thus inhibiting the binding of the FlhC/FlhD complex to class 2 promoters, resulting in decreased expression of class 2 flagellar operons. As a chaperone, effects FliD transition to the membrane by preventing its premature polymerization, and by directing it to the export apparatus. This Escherichia coli O6:K15:H31 (strain 536 / UPEC) protein is Flagellar protein FliT.